The following is a 102-amino-acid chain: uncharacterized protein (102 aa).

A helical transmembrane segment spans residues isoleucine 29–tyrosine 52.

Its subcellular location is the membrane. This is an uncharacterized protein from Saccharomyces cerevisiae (strain ATCC 204508 / S288c) (Baker's yeast).